We begin with the raw amino-acid sequence, 1661 residues long: Microtubule cross-linking factor 2 (1661 aa).

The segment at 1 to 187 is disordered; it reads MEAPAAEPPV…EPSVAASSVG (187 aa). Low complexity-rich tracts occupy residues 76-94 and 133-149; these read AVAP…VRTG and LLGL…SAAG. A compositionally biased stretch (pro residues) spans 167-176; it reads QQPPRPPASP. A required for association with Golgi apparatus membrane region spans residues 211 to 240; it reads PSGLVRELEELRSENDYLKDEIEELRAEML. Coiled coils occupy residues 218 to 281 and 310 to 351; these read LEEL…AERR and SMRL…LQTE. Positions 353 to 373 are disordered; that stretch reads ERPREHSLKKRGTRSLGKADK. 3 coiled-coil regions span residues 450–484, 820–865, and 1083–1117; these read LKLV…MKDH, IKEL…LKED, and SQEK…LQKA. Phosphoserine is present on Ser1169. Residues 1196–1221 form a disordered region; it reads AFGFVSSEPGDPEKDTKEKPGLSSRD. The span at 1206-1215 shows a compositional bias: basic and acidic residues; it reads DPEKDTKEKP. The residue at position 1255 (Ser1255) is a Phosphoserine. Disordered regions lie at residues 1432-1456, 1538-1563, and 1636-1661; these read RPCC…DSSK, RAPS…ASYH, and HSPS…PPSE. Residues 1652-1661 show a composition bias toward basic and acidic residues; that stretch reads GEERALPPSE.

It belongs to the MTCL family. As to quaternary structure, interacts with CLASP1 and CLASP2. The C-terminal 25 kDa form occurs as a monomer. Post-translationally, proteolytically cleaved in primary hepatocytes into a C-terminal 80 kDa form. Proteolytically cleaved into a C-terminal SOGA 25 kDa form that is detected in plasma. In terms of processing, phosphorylated during mitosis in a CDK1-dependent manner.

It is found in the cytoplasm. The protein resides in the cytoskeleton. It localises to the golgi apparatus membrane. The protein localises to the midbody. Its subcellular location is the secreted. In terms of biological role, microtubule-associated factor that enables integration of the centrosomal and Golgi-associated microtubules on the Golgi membrane, supporting directional migration. Preferentially acts on the perinuclear microtubules accumulated around the Golgi. Associates with the Golgi membrane through the N-terminal coiled-coil region and directly binds microtubules through the C-terminal domain. Required for faithful chromosome segregation during mitosis. Regulates autophagy by playing a role in the reduction of glucose production in an adiponectin- and insulin-dependent manner. This is Microtubule cross-linking factor 2 from Homo sapiens (Human).